A 171-amino-acid chain; its full sequence is 3-hydroxydecanoyl-[acyl-carrier-protein] dehydratase (171 aa).

The active site involves H70.

Belongs to the thioester dehydratase family. FabA subfamily. In terms of assembly, homodimer.

Its subcellular location is the cytoplasm. It catalyses the reaction a (3R)-hydroxyacyl-[ACP] = a (2E)-enoyl-[ACP] + H2O. The enzyme catalyses (3R)-hydroxydecanoyl-[ACP] = (2E)-decenoyl-[ACP] + H2O. It carries out the reaction (2E)-decenoyl-[ACP] = (3Z)-decenoyl-[ACP]. Its pathway is lipid metabolism; fatty acid biosynthesis. Necessary for the introduction of cis unsaturation into fatty acids. Catalyzes the dehydration of (3R)-3-hydroxydecanoyl-ACP to E-(2)-decenoyl-ACP and then its isomerization to Z-(3)-decenoyl-ACP. Can catalyze the dehydratase reaction for beta-hydroxyacyl-ACPs with saturated chain lengths up to 16:0, being most active on intermediate chain length. This is 3-hydroxydecanoyl-[acyl-carrier-protein] dehydratase from Photobacterium profundum (strain SS9).